A 708-amino-acid polypeptide reads, in one-letter code: Ion-translocating oxidoreductase complex subunit C (708 aa).

4Fe-4S ferredoxin-type domains follow at residues 369–397 and 407–436; these read GEPQ…QQLY and KATT…VQYF. [4Fe-4S] cluster contacts are provided by C377, C380, C383, C387, C416, C419, C422, and C426. Positions 663–684 are disordered; it reads KARKLEQQQTNAEPEEQVDPRK.

The protein belongs to the 4Fe4S bacterial-type ferredoxin family. RnfC subfamily. In terms of assembly, the complex is composed of six subunits: RsxA, RsxB, RsxC, RsxD, RsxE and RsxG. It depends on [4Fe-4S] cluster as a cofactor.

It is found in the cell inner membrane. In terms of biological role, part of a membrane-bound complex that couples electron transfer with translocation of ions across the membrane. Required to maintain the reduced state of SoxR. This chain is Ion-translocating oxidoreductase complex subunit C, found in Shigella boydii serotype 18 (strain CDC 3083-94 / BS512).